A 288-amino-acid polypeptide reads, in one-letter code: Homoserine kinase (288 aa).

79–89 (PLARGLGSSSS) is a binding site for ATP.

The protein belongs to the GHMP kinase family. Homoserine kinase subfamily.

The protein resides in the cytoplasm. It carries out the reaction L-homoserine + ATP = O-phospho-L-homoserine + ADP + H(+). The protein operates within amino-acid biosynthesis; L-threonine biosynthesis; L-threonine from L-aspartate: step 4/5. Functionally, catalyzes the ATP-dependent phosphorylation of L-homoserine to L-homoserine phosphate. The chain is Homoserine kinase from Streptococcus gordonii (strain Challis / ATCC 35105 / BCRC 15272 / CH1 / DL1 / V288).